A 122-amino-acid chain; its full sequence is Large ribosomal subunit protein uL14 (122 aa).

It belongs to the universal ribosomal protein uL14 family. In terms of assembly, part of the 50S ribosomal subunit. Forms a cluster with proteins L3 and L19. In the 70S ribosome, L14 and L19 interact and together make contacts with the 16S rRNA in bridges B5 and B8.

Its function is as follows. Binds to 23S rRNA. Forms part of two intersubunit bridges in the 70S ribosome. The chain is Large ribosomal subunit protein uL14 from Herpetosiphon aurantiacus (strain ATCC 23779 / DSM 785 / 114-95).